We begin with the raw amino-acid sequence, 109 residues long: Envelope small membrane protein (109 aa).

The Virion surface portion of the chain corresponds to 1-11 (MTNLLNKSLEE). A helical membrane pass occupies residues 12 to 32 (NGSFLTAVYIFVGFVALYLLG). Over 33–109 (RALQAFVQAA…QDVQRNKLYS (77 aa)) the chain is Intravirion. The segment at 89–109 (NGWNNKNPANFQDVQRNKLYS) is disordered. A compositionally biased stretch (polar residues) spans 90 to 109 (GWNNKNPANFQDVQRNKLYS).

Belongs to the gammacoronaviruses E protein family. In terms of assembly, homooligomer. Interacts with the M membrane protein in the budding compartment of the host cell, which is located between endoplasmic reticulum and the Golgi complex. The cytoplasmic tails of both proteins are important for this function. Interacts with Nucleoprotein.

The protein resides in the host Golgi apparatus membrane. Functionally, plays a central role in virus morphogenesis and assembly. Acts as a viroporin and self-assembles in host membranes forming pentameric protein-lipid pores that allow ion transport. Also plays a role in the induction of apoptosis. The chain is Envelope small membrane protein from Avian infectious bronchitis virus (strain KB8523) (IBV).